A 257-amino-acid polypeptide reads, in one-letter code: Melatonin receptor type 1A (257 aa).

At 5-22 the chain is on the extracellular side; sequence LASIVNDGWSLSSLHCQL. A disulfide bridge links Cys20 with Cys97. The helical transmembrane segment at 23–43 threads the bilayer; sequence SGFLMGLSVIGSVFNITGIAI. The Cytoplasmic segment spans residues 44–64; the sequence is NRYCCICHSLRYNKLYSSTNS. A helical membrane pass occupies residues 65–85; the sequence is LCYVFLIWMLTLVAIVPNLCV. The Extracellular portion of the chain corresponds to 86-107; the sequence is GTLQYDPRIYSCTFTQSVSSAY. The helical transmembrane segment at 108–128 threads the bilayer; that stretch reads TIAVVVFHFIVPMLVVIFCYL. Topologically, residues 129 to 160 are cytoplasmic; the sequence is RIWALVLQVRWRVKPDNKPKLKPQDFRNFVTM. The helical transmembrane segment at 161 to 181 threads the bilayer; that stretch reads FVVFVLFAICWAPLNFIGLVV. Over 182-194 the chain is Extracellular; the sequence is ASEPASMAPRIPE. Residues 195–215 form a helical membrane-spanning segment; that stretch reads WLFVASYYMGYFNSCLNAIIY. Topologically, residues 216–257 are cytoplasmic; that stretch reads GLLNQNFRQEYRKIIVSLCTTKMFFVDSSNHVAHRIKRKPSP.

Belongs to the G-protein coupled receptor 1 family.

It is found in the cell membrane. Functionally, high affinity receptor for melatonin. Likely to mediate the reproductive and circadian actions of melatonin. The activity of this receptor is mediated by pertussis toxin sensitive G proteins that inhibit adenylate cyclase activity. Possibly involved in sleep induction, by melatonin activation of the potassium channel KCNMA1/BK and the dissociation of G-beta and G-gamma subunits, thereby decreasing synaptic transmission. In Bos taurus (Bovine), this protein is Melatonin receptor type 1A (MTNR1A).